Consider the following 435-residue polypeptide: Endoglucanase EG-1 (435 aa).

The first 20 residues, 1–20 (MARGTALLGLTSLLLGLVNG), serve as a signal peptide directing secretion. Q21 bears the Pyrrolidone carboxylic acid mark. Disulfide bonds link C38/C44, C71/C93, and C83/C89. N109 carries an N-linked (GlcNAc...) asparagine glycan. Intrachain disulfides connect C160-C385, C192-C215, C196-C214, C235-C254, C243-C248, and C259-C335. E217 functions as the Nucleophile in the catalytic mechanism. The active-site Proton donor is the E222. N267 carries N-linked (GlcNAc...) asparagine glycosylation.

The protein belongs to the glycosyl hydrolase 7 (cellulase C) family.

The protein localises to the secreted. The enzyme catalyses Endohydrolysis of (1-&gt;4)-beta-D-glucosidic linkages in cellulose, lichenin and cereal beta-D-glucans.. Functionally, the biological conversion of cellulose to glucose generally requires three types of hydrolytic enzymes: (1) Endoglucanases which cut internal beta-1,4-glucosidic bonds; (2) Exocellobiohydrolases that cut the disaccharide cellobiose from the non-reducing end of the cellulose polymer chain; (3) Beta-1,4-glucosidases which hydrolyze the cellobiose and other short cello-oligosaccharides to glucose. The chain is Endoglucanase EG-1 (EG-1) from Humicola insolens (Soft-rot fungus).